Consider the following 370-residue polypeptide: 3-isopropylmalate dehydrogenase (370 aa).

An NAD(+)-binding site is contributed by 77-90 (GPKWDGVPYEHRPE). Residues Arg-97, Arg-107, Arg-135, and Asp-226 each coordinate substrate. Mg(2+)-binding residues include Asp-226, Asp-250, and Asp-254. 290-302 (GSAPDIAGKSIAN) contributes to the NAD(+) binding site.

Belongs to the isocitrate and isopropylmalate dehydrogenases family. LeuB type 1 subfamily. In terms of assembly, homodimer. The cofactor is Mg(2+). Mn(2+) serves as cofactor.

The protein resides in the cytoplasm. The enzyme catalyses (2R,3S)-3-isopropylmalate + NAD(+) = 4-methyl-2-oxopentanoate + CO2 + NADH. Its pathway is amino-acid biosynthesis; L-leucine biosynthesis; L-leucine from 3-methyl-2-oxobutanoate: step 3/4. Its function is as follows. Catalyzes the oxidation of 3-carboxy-2-hydroxy-4-methylpentanoate (3-isopropylmalate) to 3-carboxy-4-methyl-2-oxopentanoate. The product decarboxylates to 4-methyl-2 oxopentanoate. The protein is 3-isopropylmalate dehydrogenase (leuB) of Agrobacterium fabrum (strain C58 / ATCC 33970) (Agrobacterium tumefaciens (strain C58)).